A 305-amino-acid polypeptide reads, in one-letter code: Virulence plasmid integrase pGP7-D (305 aa).

The Core-binding (CB) domain occupies 13 to 99 (LTFGDASEIW…CYISFTKFLY (87 aa)). In terms of domain architecture, Tyr recombinase spans 127–305 (IKTESISKQE…SPLVQTPPIL (179 aa)). Active-site residues include Lys-188 and Arg-257. Catalysis depends on Tyr-289, which acts as the O-(3'-phospho-DNA)-tyrosine intermediate.

This sequence belongs to the 'phage' integrase family.

The polypeptide is Virulence plasmid integrase pGP7-D (Chlamydia trachomatis serovar L2 (strain ATCC VR-902B / DSM 19102 / 434/Bu)).